Reading from the N-terminus, the 193-residue chain is Transforming protein RhoA (193 aa).

GTP is bound by residues 12–19 (GDGACGKT) and 30–37 (FPEVYVPT). Positions 34–42 (YVPTVFENY) match the Effector region motif. Asn41 is modified ((Microbial infection) ADP-ribosylasparagine; by botulinum toxin). Residues 59–63 (DTAGQ) and 117–120 (NKKD) each bind GTP. The tract at residues 61-78 (AGQEDYDRLRPLSYPDTD) is switch II region; involved in RAP1GDS1 isoform 2 binding. Position 63 is a 5-glutamyl serotonin (Gln63). A Glycyl lysine isopeptide (Lys-Gly) (interchain with G-Cter in ubiquitin) cross-link involves residue Lys135. 160-162 (SAK) is a binding site for GTP. The residue at position 188 (Ser188) is a Phosphoserine; by PKG/PRKG1. Position 190 is a cysteine methyl ester (Cys190). A lipid anchor (S-geranylgeranyl cysteine) is attached at Cys190. Positions 191–193 (LVL) are cleaved as a propeptide — removed in mature form.

It belongs to the small GTPase superfamily. Rho family. Interacts with ARHGEF28. Interacts (via GTP-bound form) with RIPOR1 (via N-terminus); this interaction links RHOA to STK24 and STK26 kinases. Interacts with RIPOR2 (via active GTP- or inactive GDP-bound forms) isoform 1 and isoform 2; these interactions are direct, block the loading of GTP to RHOA and decrease upon chemokine CCL19 stimulation in primary T lymphocytes. Binds PRKCL1, ROCK1 and ROCK2. Interacts with ARHGEF2, ARHGEF3, NET1 and RTKN. Interacts with PLCE1 and AKAP13. Interacts with DIAPH1. Interacts (in the constitutively activated, GTP-bound form) with DGKQ. Interacts with RACK1; enhances RHOA activation. Interacts with PKP4; the interaction is detected at the midbody. Interacts (GTP-bound form preferentially) with PKN2; the interaction stimulates autophosphorylation and phosphorylation of PKN2. Interacts with ARHGDIA; this interaction inactivates and stabilizes RHOA. Interacts with ARHGDIB. Interacts (GTP-bound form) with KCNA2 (via cytoplasmic N-terminal domain). Interacts (GTP-bound form) with ECT2; the interaction results in allosteric activation of ECT2. Interacts with RAP1GDS1; the interaction is direct and in a 1:1 stoichiometry. The cofactor is Mg(2+). In terms of processing, phosphorylation by PRKG1 at Ser-188 inactivates RHOA signaling. Phosphorylation by SLK at Ser-188 in response to AGTR2 activation. Post-translationally, ubiquitinated by the BCR(KCTD13) and BCR(TNFAIP1) E3 ubiquitin ligase complexes, leading to its degradation by the proteasome, thereby regulating the actin cytoskeleton and synaptic transmission in neurons. Ubiquitinated at Lys-135 in a FBXL19-mediated manner; leading to proteasomal degradation. Serotonylation of Gln-63 by TGM2 during activation and aggregation of platelets leads to constitutive activation of GTPase activity.

Its subcellular location is the cell membrane. It localises to the cytoplasm. It is found in the cytoskeleton. The protein resides in the cleavage furrow. The protein localises to the cell cortex. Its subcellular location is the midbody. It localises to the cell projection. It is found in the lamellipodium. The protein resides in the dendrite. The protein localises to the nucleus. The catalysed reaction is GTP + H2O = GDP + phosphate + H(+). Regulated by guanine nucleotide exchange factors (GEFs) which promote the exchange of bound GDP for free GTP, GTPase activating proteins (GAPs) which increase the GTP hydrolysis activity and GDP dissociation inhibitors which inhibit the dissociation of the nucleotide from the GTPase. Activated by GEFs such as ARHGEF2, ARHGEF3, ARHGEF28 and BCR. Inhibited by GAPs such as ARHGAP30. Inhibited by GDP dissociation inhibitors such as ARHGDIA. Small GTPase which cycles between an active GTP-bound and an inactive GDP-bound state. Mainly associated with cytoskeleton organization, in active state binds to a variety of effector proteins to regulate cellular responses such as cytoskeletal dynamics, cell migration and cell cycle. Regulates a signal transduction pathway linking plasma membrane receptors to the assembly of focal adhesions and actin stress fibers. Involved in a microtubule-dependent signal that is required for the myosin contractile ring formation during cell cycle cytokinesis. Plays an essential role in cleavage furrow formation. Required for the apical junction formation of keratinocyte cell-cell adhesion. Essential for the SPATA13-mediated regulation of cell migration and adhesion assembly and disassembly. The MEMO1-RHOA-DIAPH1 signaling pathway plays an important role in ERBB2-dependent stabilization of microtubules at the cell cortex. It controls the localization of APC and CLASP2 to the cell membrane, via the regulation of GSK3B activity. In turn, membrane-bound APC allows the localization of the MACF1 to the cell membrane, which is required for microtubule capture and stabilization. Regulates KCNA2 potassium channel activity by reducing its location at the cell surface in response to CHRM1 activation; promotes KCNA2 endocytosis. Acts as an allosteric activator of guanine nucleotide exchange factor ECT2 by binding in its activated GTP-bound form to the PH domain of ECT2 which stimulates the release of PH inhibition and promotes the binding of substrate RHOA to the ECT2 catalytic center. May be an activator of PLCE1. In neurons, involved in the inhibition of the initial spine growth. Upon activation by CaMKII, modulates dendritic spine structural plasticity by relaying CaMKII transient activation to synapse-specific, long-term signaling. Acts as a regulator of platelet alpha-granule release during activation and aggregation of platelets. When activated by DAAM1 may signal centrosome maturation and chromosomal segregation during cell division. May also be involved in contractile ring formation during cytokinesis. The polypeptide is Transforming protein RhoA (RHOA) (Bos taurus (Bovine)).